Reading from the N-terminus, the 107-residue chain is U1-lycotoxin-Ls1e (107 aa).

Positions 1–20 (MMKVLVVFALLVTLISYSSS) are cleaved as a signal peptide. A propeptide spanning residues 21–41 (EGIDDLEADELLSLMANEQTR) is cleaved from the precursor. Disulfide bonds link cysteine 44–cysteine 59, cysteine 51–cysteine 68, cysteine 58–cysteine 86, and cysteine 70–cysteine 84.

This sequence belongs to the neurotoxin 19 (CSTX) family. 04 (U1-Lctx) subfamily. As to expression, expressed by the venom gland.

It localises to the secreted. The protein is U1-lycotoxin-Ls1e of Lycosa singoriensis (Wolf spider).